The following is a 197-amino-acid chain: Crossover junction endodeoxyribonuclease RuvC (197 aa).

Catalysis depends on residues Asp7, Glu68, and Asp141. Mg(2+) is bound by residues Asp7, Glu68, and Asp141. Low complexity-rich tracts occupy residues Ala165–Arg181 and Ala188–Ser197. Residues Ala165–Ser197 are disordered.

Belongs to the RuvC family. In terms of assembly, homodimer which binds Holliday junction (HJ) DNA. The HJ becomes 2-fold symmetrical on binding to RuvC with unstacked arms; it has a different conformation from HJ DNA in complex with RuvA. In the full resolvosome a probable DNA-RuvA(4)-RuvB(12)-RuvC(2) complex forms which resolves the HJ. It depends on Mg(2+) as a cofactor.

The protein localises to the cytoplasm. The enzyme catalyses Endonucleolytic cleavage at a junction such as a reciprocal single-stranded crossover between two homologous DNA duplexes (Holliday junction).. In terms of biological role, the RuvA-RuvB-RuvC complex processes Holliday junction (HJ) DNA during genetic recombination and DNA repair. Endonuclease that resolves HJ intermediates. Cleaves cruciform DNA by making single-stranded nicks across the HJ at symmetrical positions within the homologous arms, yielding a 5'-phosphate and a 3'-hydroxyl group; requires a central core of homology in the junction. The consensus cleavage sequence is 5'-(A/T)TT(C/G)-3'. Cleavage occurs on the 3'-side of the TT dinucleotide at the point of strand exchange. HJ branch migration catalyzed by RuvA-RuvB allows RuvC to scan DNA until it finds its consensus sequence, where it cleaves and resolves the cruciform DNA. This is Crossover junction endodeoxyribonuclease RuvC from Frankia alni (strain DSM 45986 / CECT 9034 / ACN14a).